The following is a 251-amino-acid chain: 3-deoxy-manno-octulosonate cytidylyltransferase (251 aa).

Belongs to the KdsB family.

The protein resides in the cytoplasm. The catalysed reaction is 3-deoxy-alpha-D-manno-oct-2-ulosonate + CTP = CMP-3-deoxy-beta-D-manno-octulosonate + diphosphate. It participates in nucleotide-sugar biosynthesis; CMP-3-deoxy-D-manno-octulosonate biosynthesis; CMP-3-deoxy-D-manno-octulosonate from 3-deoxy-D-manno-octulosonate and CTP: step 1/1. Its pathway is bacterial outer membrane biogenesis; lipopolysaccharide biosynthesis. Its function is as follows. Activates KDO (a required 8-carbon sugar) for incorporation into bacterial lipopolysaccharide in Gram-negative bacteria. The protein is 3-deoxy-manno-octulosonate cytidylyltransferase of Chlorobium luteolum (strain DSM 273 / BCRC 81028 / 2530) (Pelodictyon luteolum).